A 320-amino-acid polypeptide reads, in one-letter code: o-succinylbenzoate synthase (320 aa).

The Proton donor role is filled by K133. The Mg(2+) site is built by D161, E190, and D213. The active-site Proton acceptor is the K235.

The protein belongs to the mandelate racemase/muconate lactonizing enzyme family. MenC type 1 subfamily. A divalent metal cation is required as a cofactor.

The catalysed reaction is (1R,6R)-6-hydroxy-2-succinyl-cyclohexa-2,4-diene-1-carboxylate = 2-succinylbenzoate + H2O. It functions in the pathway quinol/quinone metabolism; 1,4-dihydroxy-2-naphthoate biosynthesis; 1,4-dihydroxy-2-naphthoate from chorismate: step 4/7. Its pathway is quinol/quinone metabolism; menaquinone biosynthesis. Its function is as follows. Converts 2-succinyl-6-hydroxy-2,4-cyclohexadiene-1-carboxylate (SHCHC) to 2-succinylbenzoate (OSB). This chain is o-succinylbenzoate synthase, found in Escherichia coli O139:H28 (strain E24377A / ETEC).